The primary structure comprises 316 residues: Petrobactin import system permease protein YclN (316 aa).

8 helical membrane passes run 5-25 (YLFILLIILAVTSVFIGVEDL), 49-69 (LISIVIAGLSMSICGLIMQQI), 94-114 (LLLFTSASPLIKMLVAFVFAL), 133-153 (IFIPLVGLMLGNIVSSIATFI), 181-201 (LLYLSIPLVIIAYVYADKFTL), 224-244 (LIIVSLITSLVILTVGMLPFL), 268-288 (VLLGAVFVLFCDILGRIIIFP), and 290-310 (EISIGLMVGIIGSGIFLFMLL).

It belongs to the binding-protein-dependent transport system permease family. FecCD subfamily. The complex is composed of two ATP-binding proteins (YclP), two transmembrane proteins (YclN and YclO) and a solute-binding protein (YclQ).

The protein resides in the cell membrane. Part of the ABC transporter complex YclNOPQ involved in uptake of ferric-petrobactin. Petrobactin is a photoreactive 3,4-catecholate siderophore produced by many members of the B.cereus group, including B.anthracis. Probably responsible for the translocation of the substrate across the membrane. In Bacillus subtilis (strain 168), this protein is Petrobactin import system permease protein YclN (yclN).